The sequence spans 593 residues: MKTLETRKEKKAQGKVLKAFGNLLQVTFEGNIRQGEVAMVHVDNLQLKSEVIEILGNQAKIQVFEDTKGVRLGSLVSFTGDLLEAELGPGLLSSIFDGLQNPLVDVADQAGLFLPKGIYLSALDRQRKWDFESSAKVGDVLFRGDRIGSTKEGRFHHFIMVPFSLYGKYRLTWVINSGSYTVDTVVAKAIDESGQEHSFTMVQKWPVKNALIHGEKIKPTKMMDTGERIIDTQFPLMKGGTFCTPGPFGAGKTVLQHHLSKYAAVDIVLFVACGERAGEVVEVLREFPHLIDPHTDEALMKRTVIICNTSSMPVAARESSIYMGITIAEYYRQMGLDVLVLADSTSRWAQALREMSGRLEEIPGEEAFPAYLSSRIAEFYERSGVVSLRHGKPGSITIGGAVSPAGGNFEEPVTQATLSVVGAFLGLSRARSDSRRYPAIDPLLSWSKYVDTVGNELSHQVDGWDQMVKRARHILFNGNEIGKRMEVVGEEGISMEDMLTYLKAELYDFSYLQQNAFDKEDAYCPLKRQIALFQLINQIFDTTFDFHTHDQAREFFLDLQNRIKNMNFISFDTEQYRKVFAEIKSIIEQQSRK.

Gly246–Thr253 provides a ligand contact to ATP.

The protein belongs to the ATPase alpha/beta chains family.

It carries out the reaction ATP + H2O + 4 H(+)(in) = ADP + phosphate + 5 H(+)(out). Functionally, produces ATP from ADP in the presence of a proton gradient across the membrane. The V-type alpha chain is a catalytic subunit. This Protochlamydia amoebophila (strain UWE25) protein is V-type ATP synthase alpha chain.